We begin with the raw amino-acid sequence, 454 residues long: Bifunctional protein GlmU (454 aa).

Residues 1–233 (MQATPRPLAL…EAETIGINSR (233 aa)) form a pyrophosphorylase region. Residues 13 to 16 (LAAG), Lys-27, Gln-80, 85 to 86 (GT), 108 to 110 (YGD), Gly-145, Glu-159, Asn-174, and Asn-231 contribute to the UDP-N-acetyl-alpha-D-glucosamine site. Residue Asp-110 coordinates Mg(2+). Asn-231 lines the Mg(2+) pocket. The segment at 234-254 (AELVRAEAQFQSQRRAALIEA) is linker. Residues 255–454 (GVTMQAPDSV…KAIKDAKSKD (200 aa)) form an N-acetyltransferase region. The UDP-N-acetyl-alpha-D-glucosamine site is built by Arg-320 and Lys-338. The active-site Proton acceptor is the His-350. Positions 353 and 364 each coordinate UDP-N-acetyl-alpha-D-glucosamine. Acetyl-CoA-binding positions include Ala-367, 373–374 (NY), Ser-392, Ser-410, and Arg-427.

The protein in the N-terminal section; belongs to the N-acetylglucosamine-1-phosphate uridyltransferase family. This sequence in the C-terminal section; belongs to the transferase hexapeptide repeat family. Homotrimer. It depends on Mg(2+) as a cofactor.

It is found in the cytoplasm. It catalyses the reaction alpha-D-glucosamine 1-phosphate + acetyl-CoA = N-acetyl-alpha-D-glucosamine 1-phosphate + CoA + H(+). The catalysed reaction is N-acetyl-alpha-D-glucosamine 1-phosphate + UTP + H(+) = UDP-N-acetyl-alpha-D-glucosamine + diphosphate. The protein operates within nucleotide-sugar biosynthesis; UDP-N-acetyl-alpha-D-glucosamine biosynthesis; N-acetyl-alpha-D-glucosamine 1-phosphate from alpha-D-glucosamine 6-phosphate (route II): step 2/2. It participates in nucleotide-sugar biosynthesis; UDP-N-acetyl-alpha-D-glucosamine biosynthesis; UDP-N-acetyl-alpha-D-glucosamine from N-acetyl-alpha-D-glucosamine 1-phosphate: step 1/1. Its pathway is bacterial outer membrane biogenesis; LPS lipid A biosynthesis. Functionally, catalyzes the last two sequential reactions in the de novo biosynthetic pathway for UDP-N-acetylglucosamine (UDP-GlcNAc). The C-terminal domain catalyzes the transfer of acetyl group from acetyl coenzyme A to glucosamine-1-phosphate (GlcN-1-P) to produce N-acetylglucosamine-1-phosphate (GlcNAc-1-P), which is converted into UDP-GlcNAc by the transfer of uridine 5-monophosphate (from uridine 5-triphosphate), a reaction catalyzed by the N-terminal domain. The protein is Bifunctional protein GlmU of Jannaschia sp. (strain CCS1).